Consider the following 861-residue polypeptide: MANDQEMSGWTDLLHSSSKLLEQAAPSSQFPPLQRNLDQLEALSKKLKAKTLRNEAPSQSIAATRLLAREGINAEQLARDLKSFELKTTFEDVFPAEATSVEEYLQQVHEMAMVSAIQEAQKDNVRSFNDYMMKVLEEDWRKEKRDFLQSLSRISMLPKTNMIDTSREAHAGQLVPVGSSPRVSSTPGKELVALANIPIHEKKAYVYGEVVKKLNTSRERGMPFRPAMCFKDAYDTLGAEVTRGKSVNMQKIWQLVQAITGEDSAVRQGVSKRMALAIGARHHLQHGHEKFIMDTIQTHPTQAALGGSVGNLQRIRAFLRIRLRDYGVLDFDSTDARRQPPVDTTWQQIYFCLRTGYYEEAREIARSTRSSQQFAPLLTEWITTDGMVAAESAAIASEECEKMLRMGDRLGRTAYDKKKLLLYTIISGSRRQIERILRDLSTLFNTIEDFLWFKLSCIRDVTGGSSSVVLNDGLAPYSLDDLQAYLNKFEPSYYTKNGKDPLVYPYVLLLSVQLLPAIMHLSKEAGDGGYNIDAVHIAISLVDHSVLSEGSGTGHKLSVMDSNAEASSMIRQYGSMFLHHGDLQMTVEYYAQAAATVGGGQLAWSGRSNVDQQRQRNLMLKQLLTEILLRERGIYFLLGARGSGEEGQLGRFFPDSRLRQQFLVEAAHQCQEAGLYDKSIELQKRVGAFSAALETINKCLSEAICSLARGRLDGESRTSGLILAGNDILETYKYYPEVSLQERERVMEQETILRELEAILSIHKLGRLGNHLDALREIAKLPFLHLDPRMPDATADVFQSASPYFQTCVPDLLKVALTCLDNVPDTDGSIRAMRSKIAGFLASNTHRNWPRDLYEKVARSF.

It belongs to the nucleoporin interacting component (NIC) family. In terms of assembly, part of the nuclear pore complex (NPC). The NPC has an eight-fold symmetrical structure comprising a central transport channel and two rings, the cytoplasmic and nuclear rings, to which eight filaments are attached. The cytoplasmic filaments have loose ends, while the nuclear filaments are joined in a distal ring, forming a nuclear basket. NPCs are highly dynamic in configuration and composition, and can be devided in 3 subcomplexes, the NUP62 subcomplex, the NUP107-160 subcomplex and the NUP93 subcomplex, containing approximately 30 different nucleoporin proteins.

It is found in the nucleus envelope. It localises to the nucleus. The protein localises to the nuclear pore complex. The polypeptide is Nuclear pore complex protein NUP93A (Arabidopsis thaliana (Mouse-ear cress)).